The primary structure comprises 273 residues: LOB domain-containing protein 20 (273 aa).

A compositionally biased stretch (basic and acidic residues) spans 1 to 15 (MADQQRGHNTSDSRR). The segment at 1 to 39 (MADQQRGHNTSDSRRKSLAGKRTSQQTPTSSLSSGGVSM) is disordered. A compositionally biased stretch (low complexity) spans 23-39 (TSQQTPTSSLSSGGVSM). The region spanning 50-152 (SPCGACKFLR…AELSVVQSQL (103 aa)) is the LOB domain. The segment at 221–248 (LEHSLQPMPPHQQRRGDYQHEDEEESGA) is disordered.

Belongs to the LOB domain-containing protein family. Expressed in roots and flowers.

The protein is LOB domain-containing protein 20 (LBD20) of Arabidopsis thaliana (Mouse-ear cress).